The primary structure comprises 296 residues: Cytidine deaminase (296 aa).

2 CMP/dCMP-type deaminase domains span residues 48–168 (DVDA…FGPV) and 187–296 (QNVN…FIEE). 89–91 (NME) contacts substrate. His102 contributes to the Zn(2+) binding site. Glu104 acts as the Proton donor in catalysis. Zn(2+) contacts are provided by Cys129 and Cys132.

It belongs to the cytidine and deoxycytidylate deaminase family. As to quaternary structure, homodimer. It depends on Zn(2+) as a cofactor.

It catalyses the reaction cytidine + H2O + H(+) = uridine + NH4(+). It carries out the reaction 2'-deoxycytidine + H2O + H(+) = 2'-deoxyuridine + NH4(+). This enzyme scavenges exogenous and endogenous cytidine and 2'-deoxycytidine for UMP synthesis. The polypeptide is Cytidine deaminase (Pectobacterium atrosepticum (strain SCRI 1043 / ATCC BAA-672) (Erwinia carotovora subsp. atroseptica)).